The chain runs to 458 residues: Histidine--tRNA ligase (458 aa).

This sequence belongs to the class-II aminoacyl-tRNA synthetase family. In terms of assembly, homodimer.

It is found in the cytoplasm. It catalyses the reaction tRNA(His) + L-histidine + ATP = L-histidyl-tRNA(His) + AMP + diphosphate + H(+). The polypeptide is Histidine--tRNA ligase (Azobacteroides pseudotrichonymphae genomovar. CFP2).